The sequence spans 241 residues: MSKRSKALRAADAKIDREKLYAPLEAVRLAKETSTSKFDGTVEVAFRLGVDPRKADQMVRGTVNLPHGTGKTARVLVFATGDRAEAARAAGADIVGSDELIDEVSKGRLDFDAVVATPDLMGKVGRLGRVLGPRGLMPNPKTGTVTPDVVKAVNEIKGGKIEFRVDKHSNLHFIIGKTSFDDTQLVENYGAALDEILRLKPSAAKGRYIKKAAISTTIGPGIPIDSNRTRNLLTEEDPAAV.

It belongs to the universal ribosomal protein uL1 family. As to quaternary structure, part of the 50S ribosomal subunit.

In terms of biological role, binds directly to 23S rRNA. The L1 stalk is quite mobile in the ribosome, and is involved in E site tRNA release. Protein L1 is also a translational repressor protein, it controls the translation of the L11 operon by binding to its mRNA. This is Large ribosomal subunit protein uL1 from Streptomyces avermitilis (strain ATCC 31267 / DSM 46492 / JCM 5070 / NBRC 14893 / NCIMB 12804 / NRRL 8165 / MA-4680).